The primary structure comprises 279 residues: ESX-1 secretion-associated protein EspG1 (279 aa).

This sequence belongs to the EspG family. As to quaternary structure, interacts specifically with ESX-1-dependent PE/PPE proteins.

It is found in the cytoplasm. Specific chaperone for cognate PE/PPE proteins. Plays an important role in preventing aggregation of PE/PPE dimers. This is ESX-1 secretion-associated protein EspG1 from Mycobacterium marinum (strain ATCC BAA-535 / M).